The primary structure comprises 469 residues: Pup--protein ligase (469 aa).

E9 lines the Mg(2+) pocket. R53 contacts ATP. Residue Y55 coordinates Mg(2+). Residue D57 is the Proton acceptor of the active site. Residue E63 coordinates Mg(2+). ATP contacts are provided by T66 and W430.

This sequence belongs to the Pup ligase/Pup deamidase family. Pup-conjugating enzyme subfamily.

The enzyme catalyses ATP + [prokaryotic ubiquitin-like protein]-L-glutamate + [protein]-L-lysine = ADP + phosphate + N(6)-([prokaryotic ubiquitin-like protein]-gamma-L-glutamyl)-[protein]-L-lysine.. The protein operates within protein degradation; proteasomal Pup-dependent pathway. It functions in the pathway protein modification; protein pupylation. In terms of biological role, catalyzes the covalent attachment of the prokaryotic ubiquitin-like protein modifier Pup to the proteasomal substrate proteins, thereby targeting them for proteasomal degradation. This tagging system is termed pupylation. The ligation reaction involves the side-chain carboxylate of the C-terminal glutamate of Pup and the side-chain amino group of a substrate lysine. This Kocuria rhizophila (strain ATCC 9341 / DSM 348 / NBRC 103217 / DC2201) protein is Pup--protein ligase.